Consider the following 1075-residue polypeptide: Nuclear factor of activated T-cells, cytoplasmic 3 (1075 aa).

Residue Thr-2 is modified to N-acetylthreonine. A disordered region spans residues 18–37; that stretch reads FGEDGAPAPPPPGSRPADLE. The interval 109 to 114 is calcineurin-binding; it reads PSIQIT. Residues 205–306 are disordered; the sequence is LGSPLTSPGG…PGHSPRGSVT (102 aa). Repeat copies occupy residues 207-223 and 236-252. Positions 207-308 are 3 X SP repeats; that stretch reads SPLTSPGGSP…HSPRGSVTED (102 aa). A compositionally biased stretch (polar residues) spans 236–253; sequence SPRQSPCHSPRSSVTDEN. Residues 256-270 show a composition bias toward low complexity; it reads SPRPASGPSSRPTSP. Positions 273–275 match the Nuclear localization signal motif; the sequence is KRR. Repeat 3 spans residues 292-308; that stretch reads SPVPSPGHSPRGSVTED. Residues Ser-344 and Ser-372 each carry the phosphoserine modification. Positions 415–596 constitute an RHD domain; it reads SSLPPLDWPL…IPVECSQRSA (182 aa). A DNA-binding region spans residues 444 to 451; the sequence is RAHYETEG. Positions 686-688 match the Nuclear localization signal motif; the sequence is KRK. 2 disordered regions span residues 711–739 and 887–988; these read DLSS…SHDS and SNTG…GLSA. 2 stretches are compositionally biased toward polar residues: residues 724–739 and 887–912; these read AQTQ…SHDS and SNTG…QLQP. Low complexity-rich tracts occupy residues 916–939 and 949–967; these read GPSH…SSPL and PMPY…SPAT. The span at 970 to 981 shows a compositional bias: polar residues; sequence HSGQHSTQAQST. A Nuclear export signal motif is present at residues 1032–1041; the sequence is TLDDVNEIIG. The segment at 1049-1075 is disordered; that stretch reads VSQGAGVSRQAPLPSPESLDLGRSDGL. Phosphoserine occurs at positions 1063 and 1066.

In terms of assembly, NFATC proteins bind to DNA as monomers. Member of the multicomponent NFATC transcription complex that consists of at least two components, a pre-existing cytoplasmic component NFATC2 and an inducible nuclear component NFATC1. Other members such as NFATC4, or members of the activating protein-1 family, MAF, GATA4 and Cbp/p300 can also bind the complex. Component of a promoter-binding complex composed of STAT3, NFATC3 and NFATC4; complex formation is enhanced by calcineurin. Interacts with TRIM17; this interaction prevents NFATC3 nuclear localization. Interacts with and ubiquitinated by STUB1/CHIP; HSPA1A/HSP70 is required as a co-chaperone. Ubiquitinated by STUB1/CHIP, leading to proteasomal degradation. In terms of processing, phosphorylated by NFATC-kinase; dephosphorylated by calcineurin. In terms of tissue distribution, predominantly expressed in thymus and is also found in peripheral blood leukocytes and kidney. Predominantly expressed in skeletal muscle. Also found weakly expressed in the thymus, kidney, testis, spleen, prostate, ovary, small intestine, heart, placenta and pancreas. As to expression, expressed in thymus and kidney. In terms of tissue distribution, expressed in thymus and skeletal muscle.

It is found in the cytoplasm. The protein resides in the nucleus. Acts as a regulator of transcriptional activation. Binds to the TNFSF11/RANKL promoter region and promotes TNFSF11 transcription. Binding to the TNFSF11 promoter region is increased by high levels of Ca(2+) which induce NFATC3 expression and may lead to regulation of TNFSF11 expression in osteoblasts. Plays a role in promoting mesenteric arterial wall remodeling in response to the intermittent hypoxia-induced increase in EDN1 and ROCK signaling. As a result NFATC3 colocalizes with F-actin filaments, translocates to the nucleus and promotes transcription of the smooth muscle hypertrophy and differentiation marker ACTA2. Promotes lipopolysaccharide-induced apoptosis and hypertrophy in cardiomyocytes. Following JAK/STAT signaling activation and as part of a complex with NFATC4 and STAT3, binds to the alpha-beta E4 promoter region of CRYAB and activates transcription in cardiomyocytes. In conjunction with NFATC4, involved in embryonic heart development via maintenance of cardiomyocyte survival, proliferation and differentiation. Plays a role in the inducible expression of cytokine genes in T-cells, especially in the induction of the IL-2. Required for thymocyte maturation during DN3 to DN4 transition and during positive selection. Positively regulates macrophage-derived polymicrobial clearance, via binding to the promoter region and promoting transcription of NOS2 resulting in subsequent generation of nitric oxide. Involved in Ca(2+)-mediated transcriptional responses upon Ca(2+) influx via ORAI1 CRAC channels. This chain is Nuclear factor of activated T-cells, cytoplasmic 3, found in Homo sapiens (Human).